We begin with the raw amino-acid sequence, 1068 residues long: Carbamoyl phosphate synthase large chain (1068 aa).

Residues 1–401 form a carboxyphosphate synthetic domain region; that stretch reads MPRNNDIKKV…ALMKAIRSLE (401 aa). ATP is bound by residues Arg-129, Arg-169, Gly-175, Gly-176, Arg-208, Ile-210, Glu-215, Gly-241, Val-242, His-243, Gln-284, and Glu-298. Residues 133–327 enclose the ATP-grasp 1 domain; that stretch reads KDTMEKIGEP…IAKVTAKIAL (195 aa). Residues Gln-284, Glu-298, and Asn-300 each contribute to the Mg(2+) site. 3 residues coordinate Mn(2+): Gln-284, Glu-298, and Asn-300. The segment at 402-546 is oligomerization domain; sequence QHVDSLMSYD…YSVFGSENEA (145 aa). Positions 547-930 are carbamoyl phosphate synthetic domain; sequence AETNPQKKVL…ALYKAFEGAG (384 aa). The ATP-grasp 2 domain maps to 672-862; the sequence is DEILQKTGIP…IVDLAARIIM (191 aa). Arg-708, Lys-747, Leu-749, Glu-753, Gly-778, Val-779, His-780, Ser-781, Gln-821, and Glu-833 together coordinate ATP. Mg(2+)-binding residues include Gln-821, Glu-833, and Asn-835. Mn(2+) contacts are provided by Gln-821, Glu-833, and Asn-835. An MGS-like domain is found at 931 to 1068; it reads VELPKYKQMI…PVDIATVKNL (138 aa). An allosteric domain region spans residues 931 to 1068; it reads VELPKYKQMI…PVDIATVKNL (138 aa).

The protein belongs to the CarB family. As to quaternary structure, composed of two chains; the small (or glutamine) chain promotes the hydrolysis of glutamine to ammonia, which is used by the large (or ammonia) chain to synthesize carbamoyl phosphate. Tetramer of heterodimers (alpha,beta)4. Mg(2+) is required as a cofactor. Mn(2+) serves as cofactor.

It catalyses the reaction hydrogencarbonate + L-glutamine + 2 ATP + H2O = carbamoyl phosphate + L-glutamate + 2 ADP + phosphate + 2 H(+). The catalysed reaction is hydrogencarbonate + NH4(+) + 2 ATP = carbamoyl phosphate + 2 ADP + phosphate + 2 H(+). The protein operates within amino-acid biosynthesis; L-arginine biosynthesis; carbamoyl phosphate from bicarbonate: step 1/1. It functions in the pathway pyrimidine metabolism; UMP biosynthesis via de novo pathway; (S)-dihydroorotate from bicarbonate: step 1/3. Large subunit of the glutamine-dependent carbamoyl phosphate synthetase (CPSase). CPSase catalyzes the formation of carbamoyl phosphate from the ammonia moiety of glutamine, carbonate, and phosphate donated by ATP, constituting the first step of 2 biosynthetic pathways, one leading to arginine and/or urea and the other to pyrimidine nucleotides. The large subunit (synthetase) binds the substrates ammonia (free or transferred from glutamine from the small subunit), hydrogencarbonate and ATP and carries out an ATP-coupled ligase reaction, activating hydrogencarbonate by forming carboxy phosphate which reacts with ammonia to form carbamoyl phosphate. The protein is Carbamoyl phosphate synthase large chain of Agathobacter rectalis (strain ATCC 33656 / DSM 3377 / JCM 17463 / KCTC 5835 / VPI 0990) (Eubacterium rectale).